A 265-amino-acid polypeptide reads, in one-letter code: MYVGYVLDKDSPVYPGPARPASLGLGPQAYGPPAPPPAPPQYPDFPSYSHVEPAPAPPTAWGAPFPAPKDDWAAAYGPGPAAPAASPASLAFGPPPDFSPVPAPPGPGPGLLAQPLGGPGTPSSPGAQRRTPYEWMRRSVAAGGGGVSGKTRTKDKYRVVYTDHQRLELEKEFHYSRYITIRRKSELAANLGLTERQVKIWFQNRRAKERKVNKKKQQQQQPPQPPTAHDITATPARPSLGGLCPSNTSLLATSSPMPVKEEFLP.

The interval 9–152 (KDSPVYPGPA…GGGGVSGKTR (144 aa)) is disordered. The segment covering 30–43 (YGPPAPPPAPPQYP) has biased composition (pro residues). Over residues 73 to 92 (AAAYGPGPAAPAASPASLAF) the composition is skewed to low complexity. Over residues 93–108 (GPPPDFSPVPAPPGPG) the composition is skewed to pro residues. The span at 110-126 (GLLAQPLGGPGTPSSPG) shows a compositional bias: low complexity. A DNA-binding region (homeobox) is located at residues 154-213 (KDKYRVVYTDHQRLELEKEFHYSRYITIRRKSELAANLGLTERQVKIWFQNRRAKERKVN). Positions 157–178 (YRVVYTDHQRLELEKEFHYSRY) are interaction with DNA. Positions 196–207 (RQVKIWFQNRRA) are interaction with 5-mCpG DNA. Residues 206 to 217 (RAKERKVNKKKQ) show a composition bias toward basic residues. The tract at residues 206 to 265 (RAKERKVNKKKQQQQQPPQPPTAHDITATPARPSLGGLCPSNTSLLATSSPMPVKEEFLP) is disordered. Polar residues predominate over residues 245–256 (PSNTSLLATSSP).

It belongs to the Caudal homeobox family.

It localises to the nucleus. Plays a role in transcriptional regulation. Involved in activated KRAS-mediated transcriptional activation of PRKD1 in colorectal cancer (CRC) cells. Binds to the PRKD1 promoter in colorectal cancer (CRC) cells. Could play a role in the terminal differentiation of the intestine. Binds preferentially to methylated DNA. The protein is Homeobox protein CDX-1 (CDX1) of Pongo pygmaeus (Bornean orangutan).